Reading from the N-terminus, the 438-residue chain is Ubiquitin carboxyl-terminal hydrolase 27 (438 aa).

The USP domain occupies 78–421 (RGLINLGNTC…EGYLLFYHKQ (344 aa)). Cys-87 acts as the Nucleophile in catalysis. His-380 functions as the Proton acceptor in the catalytic mechanism.

The protein belongs to the peptidase C19 family. Interacts with phosphorylated BCL2L11 isoform BIMEL; this interaction leads to BCL2L11 deubiquitination and stabilization.

It is found in the cytoplasm. Its subcellular location is the cytosol. It localises to the nucleus. It carries out the reaction Thiol-dependent hydrolysis of ester, thioester, amide, peptide and isopeptide bonds formed by the C-terminal Gly of ubiquitin (a 76-residue protein attached to proteins as an intracellular targeting signal).. Functionally, deubiquitinase involved in innate antiviral immunity by mediating deubiquitination of CGAS and RIGI. Negatively regulates RIGI by mediating 'Lys-63'-linked deubiquitination of RIGI, inhibiting type I interferon signaling. Also regulates 'Lys-63'-linked ubiquitination level of MDA5/IFIH1. Acts as a positive regulator of the cGAS-STING pathway by catalyzing 'Lys-48'-linked deubiquitination of CGAS, thereby promoting its stabilization. Can reduce the levels of BCL2L11/BIM ubiquitination and stabilize BCL2L11 in response to the RAF-MAPK-degradation signal. By acting on BCL2L11 levels, may counteract the anti-apoptotic effects of MAPK activity. The chain is Ubiquitin carboxyl-terminal hydrolase 27 from Mus musculus (Mouse).